A 202-amino-acid polypeptide reads, in one-letter code: Putative 3-methyladenine DNA glycosylase (202 aa).

This sequence belongs to the DNA glycosylase MPG family.

This chain is Putative 3-methyladenine DNA glycosylase, found in Clostridioides difficile (strain 630) (Peptoclostridium difficile).